A 1035-amino-acid polypeptide reads, in one-letter code: Putative protein FAM47C (1035 aa).

Disordered stretches follow at residues 1–21 (MGDQ…TPWY) and 159–797 (LEDA…RRVS). The span at 159 to 173 (LEDAGSCEGQEKTTD) shows a compositional bias: basic and acidic residues. Over residues 380-392 (PEPPKTRVPPLRP) the composition is skewed to pro residues. Basic and acidic residues predominate over residues 478–490 (PPEKDVSHLRPEP). Positions 533–544 (SLHQAPPESSVS) are enriched in polar residues. Basic and acidic residues-rich tracts occupy residues 611 to 622 (PETRVSHLRPEP), 683 to 694 (PETRVSHLRPEP), and 753 to 766 (EPLE…RPEP).

The protein belongs to the FAM47 family.

In Homo sapiens (Human), this protein is Putative protein FAM47C (FAM47C).